A 137-amino-acid chain; its full sequence is Peptide methionine sulfoxide reductase MsrB (137 aa).

The MsrB domain occupies 7–129 (PEELKNGLSE…NSASLSFTDE (123 aa)). The Zn(2+) site is built by cysteine 46, cysteine 49, cysteine 95, and cysteine 98. Cysteine 118 serves as the catalytic Nucleophile.

This sequence belongs to the MsrB Met sulfoxide reductase family. The cofactor is Zn(2+).

It carries out the reaction L-methionyl-[protein] + [thioredoxin]-disulfide + H2O = L-methionyl-(R)-S-oxide-[protein] + [thioredoxin]-dithiol. This Klebsiella pneumoniae subsp. pneumoniae (strain ATCC 700721 / MGH 78578) protein is Peptide methionine sulfoxide reductase MsrB.